Reading from the N-terminus, the 621-residue chain is 1-deoxy-D-xylulose-5-phosphate synthase (621 aa).

Thiamine diphosphate is bound by residues histidine 80 and 121–123 (GHS). Aspartate 152 is a Mg(2+) binding site. Residues 153-154 (GA), asparagine 181, tyrosine 288, and glutamate 370 contribute to the thiamine diphosphate site. Asparagine 181 is a Mg(2+) binding site.

The protein belongs to the transketolase family. DXPS subfamily. In terms of assembly, homodimer. Requires Mg(2+) as cofactor. The cofactor is thiamine diphosphate.

It catalyses the reaction D-glyceraldehyde 3-phosphate + pyruvate + H(+) = 1-deoxy-D-xylulose 5-phosphate + CO2. It participates in metabolic intermediate biosynthesis; 1-deoxy-D-xylulose 5-phosphate biosynthesis; 1-deoxy-D-xylulose 5-phosphate from D-glyceraldehyde 3-phosphate and pyruvate: step 1/1. Catalyzes the acyloin condensation reaction between C atoms 2 and 3 of pyruvate and glyceraldehyde 3-phosphate to yield 1-deoxy-D-xylulose-5-phosphate (DXP). This is 1-deoxy-D-xylulose-5-phosphate synthase from Vibrio vulnificus (strain CMCP6).